The sequence spans 88 residues: Small ribosomal subunit protein bS20 (88 aa).

This sequence belongs to the bacterial ribosomal protein bS20 family.

In terms of biological role, binds directly to 16S ribosomal RNA. The polypeptide is Small ribosomal subunit protein bS20 (Heliobacterium modesticaldum (strain ATCC 51547 / Ice1)).